The sequence spans 74 residues: U4-theraphotoxin-Cg1a (74 aa).

Positions methionine 1–alanine 19 are cleaved as a signal peptide. A propeptide spanning residues threonine 20–arginine 39 is cleaved from the precursor. Disulfide bonds link cysteine 42–cysteine 56, cysteine 49–cysteine 61, and cysteine 55–cysteine 71.

The protein belongs to the neurotoxin 36 family. 01 subfamily. As to expression, expressed by the venom gland.

The protein localises to the secreted. Its function is as follows. Probable ion channel inhibitor. The protein is U4-theraphotoxin-Cg1a of Chilobrachys guangxiensis (Chinese earth tiger tarantula).